Reading from the N-terminus, the 356-residue chain is Kelch domain-containing protein VC_1773 (356 aa).

Kelch repeat units follow at residues 72-125 (KLYV…SLSP), 163-210 (TIFM…HKNN), 288-331 (NLYA…ASNG), and 333-355 (AMYVLGGENSNGDAMTRCLSLLM).

This chain is Kelch domain-containing protein VC_1773, found in Vibrio cholerae serotype O1 (strain ATCC 39315 / El Tor Inaba N16961).